Consider the following 342-residue polypeptide: Sesquiterpene synthase MBR_09977 (342 aa).

Residues Asp91 and Asp96 each coordinate Mg(2+). Positions 91–96 (DDLFVD) match the DDXXXD motif motif. Residue Arg184 participates in substrate binding. Residues Asn230, Ser234, and Glu238 each contribute to the Mg(2+) site.

Belongs to the terpene synthase family. It depends on Mg(2+) as a cofactor.

It catalyses the reaction (2E,6E)-farnesyl diphosphate + H2O = (+)-corvol ether B + diphosphate. The catalysed reaction is (2E,6E)-farnesyl diphosphate + H2O = (+)-corvol ether A + diphosphate. Functionally, terpene synthase that catalyzes the conversion of (2E,6E)-farnesyl diphosphate (FPP) into sesquiterpenes which are important for fungi-environment interactions. Produces a mixture consisting of 8 sesquiterpenes including corvol ethers A and B, as well as traces of epizonarene, gamma-cadinene, delta-cadinene, alpha-cadinene, alpha-cadinol, and an unidentified sesquiterpene. The major product is corvol ether A. This chain is Sesquiterpene synthase MBR_09977, found in Metarhizium brunneum (strain ARSEF 3297).